The chain runs to 315 residues: Protoheme IX farnesyltransferase (315 aa).

Helical transmembrane passes span 21–41 (YFALLKPRVMSLVVFTALVGL), 52–74 (VGFCAILFIAVGAGASGALNMWW), 98–118 (GEALALGLGLSGLSVVMLALA), 121–141 (LLAAGLLAFTIFFYAVVYSMW), 150–170 (IVIGGAAGAFPPMIGWVAATG), 177–197 (VLMFALIFMWTPPHFWALALF), 223–243 (ILVYTVLLVPVALGLALTPVA), 246–266 (LYLATALVLNAIFLKGAWDIW), and 284–304 (FFKFSLLYLALHFTALLAEAI).

It belongs to the UbiA prenyltransferase family. Protoheme IX farnesyltransferase subfamily. In terms of assembly, interacts with CtaA.

It is found in the cell inner membrane. The enzyme catalyses heme b + (2E,6E)-farnesyl diphosphate + H2O = Fe(II)-heme o + diphosphate. It functions in the pathway porphyrin-containing compound metabolism; heme O biosynthesis; heme O from protoheme: step 1/1. Its function is as follows. Converts heme B (protoheme IX) to heme O by substitution of the vinyl group on carbon 2 of heme B porphyrin ring with a hydroxyethyl farnesyl side group. In Dinoroseobacter shibae (strain DSM 16493 / NCIMB 14021 / DFL 12), this protein is Protoheme IX farnesyltransferase.